The chain runs to 481 residues: MEWAEKYRPEHLADIVGNTSAVRQMADWAKTWTARSKPLLLYGKPGIGKTSSVYALARDMNWDVIELNASDQRTAAVIERIAGAGSTTASLTGSARKLIIMDEADNLQGTADRGGAKAILECIKNARQPIVLIANDLYGLAAELRLRCEPVQFRALPARSIAPRLKYICSSEKIACSESAVHEIAESAEGDMRSAVNMLYASAIGRQSLDGKNVHTSQKDERVSIFSLVTAVFGKTSDEELIRLSRDVDEFPEDIEQWVEGSVHTITDPAGLGLAYRSLSRADEYIGYTYRRQYHTLWRYATAVMLLGVADASAGKGIHSRILPPERWQKMSVAKKQKAIRAAVLSRLAATMQLPQATLREKYMDIITLLVDLDPETFARELALDADGLNFFLNDKSRAQEILKSLAKVEREKEPEPKKKGRKKAESPAKDADPAPAVDPVPKEELPVKSAPEERPADPPAPEEPGRKTVAHNQSTLFDGF.

43–50 (GKPGIGKT) serves as a coordination point for ATP. Basic and acidic residues-rich tracts occupy residues 408–433 (KVER…KDAD) and 441–457 (VPKE…ERPA). The segment at 408–481 (KVEREKEPEP…HNQSTLFDGF (74 aa)) is disordered. Polar residues predominate over residues 471–481 (AHNQSTLFDGF).

It belongs to the activator 1 small subunits family. RfcL subfamily. As to quaternary structure, heteromultimer composed of small subunits (RfcS) and large subunits (RfcL).

In terms of biological role, part of the RFC clamp loader complex which loads the PCNA sliding clamp onto DNA. In Methanoregula boonei (strain DSM 21154 / JCM 14090 / 6A8), this protein is Replication factor C large subunit.